The sequence spans 393 residues: Formate-dependent phosphoribosylglycinamide formyltransferase (393 aa).

N(1)-(5-phospho-beta-D-ribosyl)glycinamide-binding positions include 22–23 (EL) and Glu82. Residues Arg114, Lys155, 160 to 165 (SSGKGQ), 195 to 198 (EGFV), and Glu203 contribute to the ATP site. The ATP-grasp domain maps to 119-308 (RLAAEDLGIP…EFALHLRAIL (190 aa)). Mg(2+) is bound by residues Glu267 and Glu279. N(1)-(5-phospho-beta-D-ribosyl)glycinamide is bound by residues Asp286, Lys356, and 363–364 (RR).

This sequence belongs to the PurK/PurT family. In terms of assembly, homodimer.

It carries out the reaction N(1)-(5-phospho-beta-D-ribosyl)glycinamide + formate + ATP = N(2)-formyl-N(1)-(5-phospho-beta-D-ribosyl)glycinamide + ADP + phosphate + H(+). It functions in the pathway purine metabolism; IMP biosynthesis via de novo pathway; N(2)-formyl-N(1)-(5-phospho-D-ribosyl)glycinamide from N(1)-(5-phospho-D-ribosyl)glycinamide (formate route): step 1/1. Involved in the de novo purine biosynthesis. Catalyzes the transfer of formate to 5-phospho-ribosyl-glycinamide (GAR), producing 5-phospho-ribosyl-N-formylglycinamide (FGAR). Formate is provided by PurU via hydrolysis of 10-formyl-tetrahydrofolate. This is Formate-dependent phosphoribosylglycinamide formyltransferase from Hydrogenovibrio crunogenus (strain DSM 25203 / XCL-2) (Thiomicrospira crunogena).